The sequence spans 279 residues: Pantothenate synthetase (279 aa).

26–33 (MGNLHEGH) provides a ligand contact to ATP. Residue His-33 is the Proton donor of the active site. Residue Gln-57 participates in (R)-pantoate binding. Gln-57 contacts beta-alanine. 144 to 147 (GKKD) contributes to the ATP binding site. A (R)-pantoate-binding site is contributed by Gln-150. ATP contacts are provided by residues Val-173 and 181 to 184 (LSSR).

The protein belongs to the pantothenate synthetase family. In terms of assembly, homodimer.

It localises to the cytoplasm. It catalyses the reaction (R)-pantoate + beta-alanine + ATP = (R)-pantothenate + AMP + diphosphate + H(+). Its pathway is cofactor biosynthesis; (R)-pantothenate biosynthesis; (R)-pantothenate from (R)-pantoate and beta-alanine: step 1/1. In terms of biological role, catalyzes the condensation of pantoate with beta-alanine in an ATP-dependent reaction via a pantoyl-adenylate intermediate. This chain is Pantothenate synthetase, found in Burkholderia lata (strain ATCC 17760 / DSM 23089 / LMG 22485 / NCIMB 9086 / R18194 / 383).